A 312-amino-acid polypeptide reads, in one-letter code: Olfactory receptor 4L1 (312 aa).

At 1–25 the chain is on the extracellular side; that stretch reads MDLKNGSLVTEFILLGFFGRWELQI. Asn-5 carries N-linked (GlcNAc...) asparagine glycosylation. The helical transmembrane segment at 26–49 threads the bilayer; that stretch reads FFFVTFSLIYGATVMGNILIMVTV. At 50 to 57 the chain is on the cytoplasmic side; it reads TCRSTLHS. The chain crosses the membrane as a helical span at residues 58–79; that stretch reads PLYFLLGNLSFLDMCLSTATTP. Residues 80–100 lie on the Extracellular side of the membrane; that stretch reads KMIIDLLTDHKTISVWGCVTQ. Cys-97 and Cys-189 are oxidised to a cystine. A helical transmembrane segment spans residues 101 to 120; sequence MFFMHFFGGAEMTLLIIMAF. Topologically, residues 121 to 139 are cytoplasmic; that stretch reads DRYVAICKPLHYRTIMSHK. A helical transmembrane segment spans residues 140–158; sequence LLKGFAILSWIIGFLHSIS. Residues 159–195 are Extracellular-facing; it reads QIVLTMNLPFCGHNVINNIFCDLPLVIKLACIETYTL. Residues 196 to 219 form a helical membrane-spanning segment; the sequence is ELFVIADSGLLSFTCFILLLVSYI. Topologically, residues 220–235 are cytoplasmic; the sequence is VILVSVPKKSSHGLSK. A helical transmembrane segment spans residues 236–258; sequence ALSTLSAHIIVVTLFFGPCIFIY. Topologically, residues 259–269 are extracellular; that stretch reads VWPFSSLASNK. Asn-268 carries an N-linked (GlcNAc...) asparagine glycan. The helical transmembrane segment at 270–289 threads the bilayer; the sequence is TLAVFYTVITPLLNPSIYTL. Residues 290 to 312 are Cytoplasmic-facing; that stretch reads RNKKMQEAIRKLRFQYVSSAQNF.

Belongs to the G-protein coupled receptor 1 family.

It is found in the cell membrane. Functionally, odorant receptor. The sequence is that of Olfactory receptor 4L1 (OR4L1) from Homo sapiens (Human).